A 354-amino-acid polypeptide reads, in one-letter code: Thiamine thiazole synthase 1, chloroplastic (354 aa).

The transit peptide at 1–43 directs the protein to the chloroplast; the sequence is MATTAASSLLKSSFAGSRLPSATRAPSSVVVSTGGAPRTAAIS. Residues A96, 116 to 117, G124, and V190 contribute to the substrate site; that span reads EQ. Position 219 is a 2,3-didehydroalanine (Cys) (C219). Residues D221, H236, M288, and 298-300 each bind substrate; that span reads RMG.

Belongs to the THI4 family. In terms of assembly, homooctamer. Requires Fe cation as cofactor. Post-translationally, during the catalytic reaction, a sulfide is transferred from Cys-219 to a reaction intermediate, generating a dehydroalanine residue.

Its subcellular location is the plastid. The protein localises to the chloroplast. It carries out the reaction [ADP-thiazole synthase]-L-cysteine + glycine + NAD(+) = [ADP-thiazole synthase]-dehydroalanine + ADP-5-ethyl-4-methylthiazole-2-carboxylate + nicotinamide + 3 H2O + 2 H(+). Functionally, involved in biosynthesis of the thiamine precursor thiazole. Catalyzes the conversion of NAD and glycine to adenosine diphosphate 5-(2-hydroxyethyl)-4-methylthiazole-2-carboxylic acid (ADT), an adenylated thiazole intermediate. The reaction includes an iron-dependent sulfide transfer from a conserved cysteine residue of the protein to a thiazole intermediate. The enzyme can only undergo a single turnover, which suggests it is a suicide enzyme. May have additional roles in adaptation to various stress conditions and in DNA damage tolerance. This chain is Thiamine thiazole synthase 1, chloroplastic, found in Sorghum bicolor (Sorghum).